We begin with the raw amino-acid sequence, 71 residues long: Small ribosomal subunit protein bS21 (71 aa).

The protein belongs to the bacterial ribosomal protein bS21 family.

This chain is Small ribosomal subunit protein bS21, found in Shewanella sediminis (strain HAW-EB3).